Reading from the N-terminus, the 359-residue chain is Protein Wnt-5a (359 aa).

The first 20 residues, methionine 1–aspartate 20, serve as a signal peptide directing secretion. Cysteine 83 and cysteine 94 are disulfide-bonded. Residues asparagine 93 and asparagine 99 are each glycosylated (N-linked (GlcNAc...) asparagine). 10 disulfides stabilise this stretch: cysteine 133–cysteine 141, cysteine 143–cysteine 161, cysteine 217–cysteine 231, cysteine 219–cysteine 226, cysteine 288–cysteine 319, cysteine 304–cysteine 314, cysteine 318–cysteine 358, cysteine 334–cysteine 349, cysteine 336–cysteine 346, and cysteine 341–cysteine 342. Residue serine 223 is the site of O-palmitoleoyl serine; by PORCN attachment. N-linked (GlcNAc...) asparagine glycosylation is found at asparagine 291 and asparagine 305.

This sequence belongs to the Wnt family. In terms of processing, palmitoleoylation is required for efficient binding to frizzled receptors. Depalmitoleoylation leads to Wnt signaling pathway inhibition. Neuroectodermal and non-neuroectodermal tissues.

The protein resides in the secreted. Its subcellular location is the extracellular space. The protein localises to the extracellular matrix. Ligand for members of the frizzled family of seven transmembrane receptors. Can activate or inhibit canonical Wnt signaling, depending on receptor context. Required during embryogenesis for extension of the primary anterior-posterior axis. The sequence is that of Protein Wnt-5a (WNT-5A) from Ambystoma mexicanum (Axolotl).